A 203-amino-acid chain; its full sequence is Urease accessory protein UreG (203 aa).

11-18 (GPVGSGKT) contributes to the GTP binding site.

Belongs to the SIMIBI class G3E GTPase family. UreG subfamily. Homodimer. UreD, UreF and UreG form a complex that acts as a GTP-hydrolysis-dependent molecular chaperone, activating the urease apoprotein by helping to assemble the nickel containing metallocenter of UreC. The UreE protein probably delivers the nickel.

It localises to the cytoplasm. In terms of biological role, facilitates the functional incorporation of the urease nickel metallocenter. This process requires GTP hydrolysis, probably effectuated by UreG. This chain is Urease accessory protein UreG, found in Prochlorococcus marinus (strain MIT 9312).